An 86-amino-acid chain; its full sequence is Small ribosomal subunit protein bS16 (86 aa).

The protein belongs to the bacterial ribosomal protein bS16 family.

The protein is Small ribosomal subunit protein bS16 of Xylella fastidiosa (strain M23).